A 415-amino-acid polypeptide reads, in one-letter code: Serine--tRNA ligase (415 aa).

Residue 231–233 (TAE) coordinates L-serine. Residue 262–264 (RSE) participates in ATP binding. Residue E285 coordinates L-serine. 349–352 (EISS) provides a ligand contact to ATP. An L-serine-binding site is contributed by S383.

The protein belongs to the class-II aminoacyl-tRNA synthetase family. Type-1 seryl-tRNA synthetase subfamily. As to quaternary structure, homodimer. The tRNA molecule binds across the dimer.

Its subcellular location is the cytoplasm. It carries out the reaction tRNA(Ser) + L-serine + ATP = L-seryl-tRNA(Ser) + AMP + diphosphate + H(+). The catalysed reaction is tRNA(Sec) + L-serine + ATP = L-seryl-tRNA(Sec) + AMP + diphosphate + H(+). Its pathway is aminoacyl-tRNA biosynthesis; selenocysteinyl-tRNA(Sec) biosynthesis; L-seryl-tRNA(Sec) from L-serine and tRNA(Sec): step 1/1. Catalyzes the attachment of serine to tRNA(Ser). Is also able to aminoacylate tRNA(Sec) with serine, to form the misacylated tRNA L-seryl-tRNA(Sec), which will be further converted into selenocysteinyl-tRNA(Sec). This is Serine--tRNA ligase from Helicobacter pylori (strain P12).